The following is a 625-amino-acid chain: MSGYVLFSRGATAAAAAARASRVLRVFTERRRTLHTSLQSCSFAKELFLGHIQQKGVFPFPEVSQEELSEINQFVGPLEKFFNEEVDSRKIDQEGKIPADTLAKLKSLGLFGIQVPEEYGGLGLSNTMYARLGEIISMDASITVTLAAHQAIGLKGIILVGNEEQKAKYLPKLSSGEHIAAFCLTEPASGSDAASIQTRATLSEDKKYFVLNGSKVWITNGGLANIFTVFAKTEVVDSDGSIKDKMTAFIVERDFGGITNGKPEDKLGIRGSNTCEVHFENTRVPVENVLGEVGGGFKVAMNILNSGRFSMGSAVAGMLKKLIEQTAEYACTRKQFNRNLSEFGLIQEKFALMAQKAYVMESMAYLTSGMLDQPGFPDCSIEAAMVKVFSSEAAWQCVSEALQILGGSGYMKDYPYERMLRDARILLIFEGTNEILRLFIALTGLQHAGRILTSRIKELKSGNVTTVMETIGRKLRDSLGRTVDLGLSSNIAVVHPSLGDSANKLEENVHYFGRTVETLLLRFGKTIVEEQLVLKRVANILINLYGMTAVLSRASRSIRIGLKNHDHEILLANMFCVEAYFQNLFSLSQLDKYAPENLDEQIKKVSQQILEKRAYICAHPLDRAS.

A mitochondrion-targeting transit peptide spans 1–41; that stretch reads MSGYVLFSRGATAAAAAARASRVLRVFTERRRTLHTSLQSC. Lys45 carries the post-translational modification N6-acetyllysine. Lys96 is modified (N6-succinyllysine). Glu430 acts as the Proton acceptor in catalysis. Thr482 carries the post-translational modification Phosphothreonine. An N6-acetyllysine; alternate modification is found at Lys525. The residue at position 525 (Lys525) is an N6-succinyllysine; alternate.

It belongs to the acyl-CoA dehydrogenase family. In terms of assembly, homodimer. Interacts with NDUFAF1 and ECSIT. Part of the mitochondrial complex I assembly/MCIA complex that comprises at least the core subunits TMEM126B, NDUFAF1, ECSIT and ACAD9 and complement subunits such as COA1 and TMEM186. Interacts with TMEM70 and TMEM242. It depends on FAD as a cofactor.

It localises to the mitochondrion inner membrane. The catalysed reaction is eicosanoyl-CoA + oxidized [electron-transfer flavoprotein] + H(+) = (2E)-eicosenoyl-CoA + reduced [electron-transfer flavoprotein]. The enzyme catalyses octadecanoyl-CoA + oxidized [electron-transfer flavoprotein] + H(+) = (2E)-octadecenoyl-CoA + reduced [electron-transfer flavoprotein]. It catalyses the reaction oxidized [electron-transfer flavoprotein] + hexadecanoyl-CoA + H(+) = (2E)-hexadecenoyl-CoA + reduced [electron-transfer flavoprotein]. It carries out the reaction decanoyl-CoA + oxidized [electron-transfer flavoprotein] + H(+) = (2E)-decenoyl-CoA + reduced [electron-transfer flavoprotein]. The catalysed reaction is nonanoyl-CoA + oxidized [electron-transfer flavoprotein] + H(+) = (2E)-nonenoyl-CoA + reduced [electron-transfer flavoprotein]. The enzyme catalyses pentadecanoyl-CoA + oxidized [electron-transfer flavoprotein] + H(+) = (2E)-pentadecenoyl-CoA + reduced [electron-transfer flavoprotein]. It catalyses the reaction undecanoyl-CoA + oxidized [electron-transfer flavoprotein] + H(+) = trans-2-undecenoyl-CoA + reduced [electron-transfer flavoprotein]. It carries out the reaction (9Z)-hexadecenoyl-CoA + oxidized [electron-transfer flavoprotein] + H(+) = (2E,9Z)-hexadecadienoyl-CoA + reduced [electron-transfer flavoprotein]. The catalysed reaction is heptadecanoyl-CoA + oxidized [electron-transfer flavoprotein] + H(+) = trans-2-heptadecenoyl-CoA + reduced [electron-transfer flavoprotein]. The enzyme catalyses (9E)-octadecenoyl-CoA + oxidized [electron-transfer flavoprotein] + H(+) = (2E,9E)-octadecadienoyl-CoA + reduced [electron-transfer flavoprotein]. It catalyses the reaction oxidized [electron-transfer flavoprotein] + (9Z)-octadecenoyl-CoA + H(+) = (2E,9Z)-octadecadienoyl-CoA + reduced [electron-transfer flavoprotein]. It carries out the reaction (9Z,12Z)-octadecadienoyl-CoA + oxidized [electron-transfer flavoprotein] + H(+) = (2E,9Z,12Z)-octadecatrienoyl-CoA + reduced [electron-transfer flavoprotein]. The catalysed reaction is (4Z,7Z,10Z,13Z,16Z,19Z)-docosahexaenoyl-CoA + oxidized [electron-transfer flavoprotein] + H(+) = (2E,4Z,7Z,10Z,13Z,16Z,19Z)-docosaheptaenoyl-CoA + reduced [electron-transfer flavoprotein]. The enzyme catalyses tetradecanoyl-CoA + oxidized [electron-transfer flavoprotein] + H(+) = (2E)-tetradecenoyl-CoA + reduced [electron-transfer flavoprotein]. In terms of biological role, as part of the MCIA complex, primarily participates in the assembly of the mitochondrial complex I and therefore plays a role in oxidative phosphorylation. This moonlighting protein also has a dehydrogenase activity toward a broad range of substrates with greater specificity for long-chain unsaturated acyl-CoAs. However, in vivo, it does not seem to play a primary role in fatty acid oxidation. In addition, the function in complex I assembly is independent of the dehydrogenase activity of the protein. This is Complex I assembly factor ACAD9, mitochondrial from Rattus norvegicus (Rat).